Consider the following 354-residue polypeptide: Histidinol-phosphate aminotransferase (354 aa).

K215 carries the post-translational modification N6-(pyridoxal phosphate)lysine.

The protein belongs to the class-II pyridoxal-phosphate-dependent aminotransferase family. Histidinol-phosphate aminotransferase subfamily. Homodimer. Pyridoxal 5'-phosphate is required as a cofactor.

It catalyses the reaction L-histidinol phosphate + 2-oxoglutarate = 3-(imidazol-4-yl)-2-oxopropyl phosphate + L-glutamate. It participates in amino-acid biosynthesis; L-histidine biosynthesis; L-histidine from 5-phospho-alpha-D-ribose 1-diphosphate: step 7/9. This is Histidinol-phosphate aminotransferase from Vesicomyosocius okutanii subsp. Calyptogena okutanii (strain HA).